Here is a 507-residue protein sequence, read N- to C-terminus: ATP synthase subunit alpha, chloroplastic (507 aa).

170–177 (GDRQTGKT) is an ATP binding site.

Belongs to the ATPase alpha/beta chains family. As to quaternary structure, F-type ATPases have 2 components, CF(1) - the catalytic core - and CF(0) - the membrane proton channel. CF(1) has five subunits: alpha(3), beta(3), gamma(1), delta(1), epsilon(1). CF(0) has four main subunits: a, b, b' and c.

It localises to the plastid. Its subcellular location is the chloroplast thylakoid membrane. It carries out the reaction ATP + H2O + 4 H(+)(in) = ADP + phosphate + 5 H(+)(out). Its function is as follows. Produces ATP from ADP in the presence of a proton gradient across the membrane. The alpha chain is a regulatory subunit. This is ATP synthase subunit alpha, chloroplastic from Amborella trichopoda.